Consider the following 331-residue polypeptide: Phosphoenolpyruvate transferase (331 aa).

A 7,8-didemethyl-8-hydroxy-5-deazariboflavin-binding site is contributed by D63.

This sequence belongs to the CofD family. As to quaternary structure, homodimer. Mg(2+) serves as cofactor.

It catalyses the reaction enolpyruvoyl-2-diphospho-5'-guanosine + 7,8-didemethyl-8-hydroxy-5-deazariboflavin = dehydro coenzyme F420-0 + GMP + H(+). It participates in cofactor biosynthesis; coenzyme F420 biosynthesis. In terms of biological role, catalyzes the transfer of the phosphoenolpyruvate moiety from enoylpyruvoyl-2-diphospho-5'-guanosine (EPPG) to 7,8-didemethyl-8-hydroxy-5-deazariboflavin (FO) with the formation of dehydro coenzyme F420-0 and GMP. This is Phosphoenolpyruvate transferase from Mycobacterium sp. (strain KMS).